A 602-amino-acid polypeptide reads, in one-letter code: Aspartate--tRNA(Asp/Asn) ligase (602 aa).

Glu-187 serves as a coordination point for L-aspartate. Residues 211–214 (QQFK) form an aspartate region. 2 residues coordinate L-aspartate: Arg-233 and His-461. 233–235 (RDE) is an ATP binding site. Position 495 (Glu-495) interacts with ATP. Arg-502 provides a ligand contact to L-aspartate. 547-550 (GLDR) is an ATP binding site.

This sequence belongs to the class-II aminoacyl-tRNA synthetase family. Type 1 subfamily. In terms of assembly, homodimer.

The protein resides in the cytoplasm. It carries out the reaction tRNA(Asx) + L-aspartate + ATP = L-aspartyl-tRNA(Asx) + AMP + diphosphate. Functionally, aspartyl-tRNA synthetase with relaxed tRNA specificity since it is able to aspartylate not only its cognate tRNA(Asp) but also tRNA(Asn). Reaction proceeds in two steps: L-aspartate is first activated by ATP to form Asp-AMP and then transferred to the acceptor end of tRNA(Asp/Asn). The chain is Aspartate--tRNA(Asp/Asn) ligase from Chlorobium phaeovibrioides (strain DSM 265 / 1930) (Prosthecochloris vibrioformis (strain DSM 265)).